The following is a 203-amino-acid chain: Cell division protein SepF (203 aa).

Disordered regions lie at residues Asp26–Gln51 and Gly167–Gln203. 2 stretches are compositionally biased toward basic and acidic residues: residues Glu39–Gly50 and Arg183–Gln203.

This sequence belongs to the SepF family. As to quaternary structure, homodimer. Interacts with FtsZ.

It is found in the cytoplasm. Its function is as follows. Cell division protein that is part of the divisome complex and is recruited early to the Z-ring. Probably stimulates Z-ring formation, perhaps through the cross-linking of FtsZ protofilaments. Its function overlaps with FtsA. The sequence is that of Cell division protein SepF from Symbiobacterium thermophilum (strain DSM 24528 / JCM 14929 / IAM 14863 / T).